A 202-amino-acid chain; its full sequence is Imidazoleglycerol-phosphate dehydratase (202 aa).

It belongs to the imidazoleglycerol-phosphate dehydratase family.

It is found in the cytoplasm. It catalyses the reaction D-erythro-1-(imidazol-4-yl)glycerol 3-phosphate = 3-(imidazol-4-yl)-2-oxopropyl phosphate + H2O. It participates in amino-acid biosynthesis; L-histidine biosynthesis; L-histidine from 5-phospho-alpha-D-ribose 1-diphosphate: step 6/9. The sequence is that of Imidazoleglycerol-phosphate dehydratase from Lactococcus lactis subsp. cremoris (strain SK11).